A 457-amino-acid polypeptide reads, in one-letter code: Multidrug resistance protein MdtK (457 aa).

Transmembrane regions (helical) follow at residues 11-31 (LLAL…MGFV), 53-73 (IWLP…PVIA), 93-113 (WLAG…GYII), 127-147 (AVGY…FQVA), 160-180 (GMVM…IFIY), 189-209 (GGVG…LAMV), 243-263 (LPIA…ALLV), 276-296 (IALN…AAVT), 314-334 (AART…IFTV), 350-370 (VVTL…SDSI), 387-407 (IFYI…YILA), and 418-438 (PAGF…MMML).

Belongs to the multi antimicrobial extrusion (MATE) (TC 2.A.66.1) family. MdtK subfamily.

Its subcellular location is the cell inner membrane. In terms of biological role, multidrug efflux pump that functions probably as a Na(+)/drug antiporter. This Escherichia coli O139:H28 (strain E24377A / ETEC) protein is Multidrug resistance protein MdtK.